Reading from the N-terminus, the 556-residue chain is 2-succinyl-5-enolpyruvyl-6-hydroxy-3-cyclohexene-1-carboxylate synthase (556 aa).

This sequence belongs to the TPP enzyme family. MenD subfamily. As to quaternary structure, homodimer. The cofactor is Mg(2+). Mn(2+) serves as cofactor. It depends on thiamine diphosphate as a cofactor.

It carries out the reaction isochorismate + 2-oxoglutarate + H(+) = 5-enolpyruvoyl-6-hydroxy-2-succinyl-cyclohex-3-ene-1-carboxylate + CO2. The protein operates within quinol/quinone metabolism; 1,4-dihydroxy-2-naphthoate biosynthesis; 1,4-dihydroxy-2-naphthoate from chorismate: step 2/7. Its pathway is quinol/quinone metabolism; menaquinone biosynthesis. In terms of biological role, catalyzes the thiamine diphosphate-dependent decarboxylation of 2-oxoglutarate and the subsequent addition of the resulting succinic semialdehyde-thiamine pyrophosphate anion to isochorismate to yield 2-succinyl-5-enolpyruvyl-6-hydroxy-3-cyclohexene-1-carboxylate (SEPHCHC). The chain is 2-succinyl-5-enolpyruvyl-6-hydroxy-3-cyclohexene-1-carboxylate synthase from Salmonella paratyphi C (strain RKS4594).